The sequence spans 107 residues: Large ribosomal subunit protein bL21 (107 aa).

This sequence belongs to the bacterial ribosomal protein bL21 family. Part of the 50S ribosomal subunit. Contacts protein L20.

This protein binds to 23S rRNA in the presence of protein L20. In Buchnera aphidicola subsp. Schizaphis graminum (strain Sg), this protein is Large ribosomal subunit protein bL21.